Reading from the N-terminus, the 88-residue chain is M-zodatoxin-Lt1a (88 aa).

A signal peptide spans 1–22 (MKYFVVALALAVALVCIAESTA). Positions 23 to 62 (YDVNEELENELDDLSDAAWLAKAAEDLQALDDFEESEESR) are excised as a propeptide. The short motif at 59-62 (EESR) is the Processing quadruplet motif element.

In terms of processing, cleavage of the propeptide depends on the processing quadruplet motif (XXXR, with at least one of X being E). Expressed by the venom gland.

The protein resides in the secreted. Functionally, has antimicrobial activity against Gram-positive bacteria (A.globiformis VKM Ac-1112 (MIC=0.5 uM), and B.subtilis VKM B-501 (MIC=1.0 uM)), Gram-negative bacteria (E.coli DH5-alpha (MIC=1.0 uM), E.coli MH1 (MIC=0.7 uM), and P.aeruginosa PAO1 (MIC=4.1 uM)), and yeasts (P.pastoris GS115 (MIC=17 uM), and S.cerevisiae Y190 (MIC&gt;33 uM)). Has a moderate hemolytic activity against rabbit erythrocytes. Causes paralysis, but is not lethal when injected into insect (M.domestica) larvae. The polypeptide is M-zodatoxin-Lt1a (Lachesana tarabaevi (Spider)).